The following is a 352-amino-acid chain: Glucose 1-dehydrogenase 1 (352 aa).

Cys35 is a Zn(2+) binding site. Position 37 (Thr37) interacts with substrate. Zn(2+) is bound by residues His60 and Glu61. Asn83 contacts substrate. The Zn(2+) site is built by Cys87, Cys90, Cys93, and Cys101. Substrate contacts are provided by Glu108, Gln144, and Asp148. Gln144 lines the Zn(2+) pocket. Residues 182–185 (TGTI), 204–206 (NKR), 264–266 (FGF), 292–294 (LIN), and Lys341 each bind NADP(+). Asn294 provides a ligand contact to substrate.

Belongs to the zinc-containing alcohol dehydrogenase family. Glucose 1-dehydrogenase subfamily. Requires Zn(2+) as cofactor.

It carries out the reaction D-glucose + NAD(+) = D-glucono-1,5-lactone + NADH + H(+). The enzyme catalyses D-glucose + NADP(+) = D-glucono-1,5-lactone + NADPH + H(+). In terms of biological role, catalyzes the NAD(P)(+)-dependent oxidation of D-glucose to D-gluconate via gluconolactone. Can utilize both NAD(+) and NADP(+) as electron acceptor. Is involved in the degradation of glucose through a non-phosphorylative variant of the Entner-Doudoroff pathway. This Picrophilus torridus (strain ATCC 700027 / DSM 9790 / JCM 10055 / NBRC 100828 / KAW 2/3) protein is Glucose 1-dehydrogenase 1.